We begin with the raw amino-acid sequence, 128 residues long: Probable 4-amino-4-deoxy-L-arabinose-phosphoundecaprenol flippase subunit ArnF (128 aa).

The Cytoplasmic segment spans residues 1-2; that stretch reads MG. Residues 3 to 23 form a helical membrane-spanning segment; the sequence is LMWGLFSVIIASVAQLSLGFA. Topologically, residues 24 to 35 are periplasmic; sequence ASHLPPMTHLWD. The chain crosses the membrane as a helical span at residues 36-56; it reads FIAALLAFGLDARILLLGLLG. The Cytoplasmic portion of the chain corresponds to 57 to 76; it reads YLLSVFCWYKTLHKLALSKA. A helical transmembrane segment spans residues 77 to 97; that stretch reads YALLSMSYVLVWIASMVLPGW. The Periplasmic segment spans residues 98-100; it reads EGT. The chain crosses the membrane as a helical span at residues 101 to 121; that stretch reads FSLKALLGVACIMSGLMLIFL. At 122–128 the chain is on the cytoplasmic side; that stretch reads PMTKQRY.

It belongs to the ArnF family. As to quaternary structure, heterodimer of ArnE and ArnF.

The protein resides in the cell inner membrane. It functions in the pathway bacterial outer membrane biogenesis; lipopolysaccharide biosynthesis. In terms of biological role, translocates 4-amino-4-deoxy-L-arabinose-phosphoundecaprenol (alpha-L-Ara4N-phosphoundecaprenol) from the cytoplasmic to the periplasmic side of the inner membrane. The polypeptide is Probable 4-amino-4-deoxy-L-arabinose-phosphoundecaprenol flippase subunit ArnF (Escherichia coli (strain 55989 / EAEC)).